A 146-amino-acid chain; its full sequence is Hut operon positive regulatory protein (146 aa).

This sequence belongs to the HutP family. Homohexamer.

Its function is as follows. Antiterminator that binds to cis-acting regulatory sequences on the mRNA in the presence of histidine, thereby suppressing transcription termination and activating the hut operon for histidine utilization. In Bacillus cereus (strain G9842), this protein is Hut operon positive regulatory protein.